A 291-amino-acid chain; its full sequence is 3-hydroxy-5-phosphonooxypentane-2,4-dione thiolase (291 aa).

The active-site Schiff-base intermediate with substrate is the K203.

Belongs to the DeoC/FbaB aldolase family. In terms of assembly, homodecamer.

The protein localises to the cytoplasm. It carries out the reaction dihydroxyacetone phosphate + acetyl-CoA = 3-hydroxy-2,4-dioxopentyl phosphate + CoA. Functionally, involved in the degradation of phospho-AI-2, thereby terminating induction of the lsr operon and closing the AI-2 signaling cycle. Catalyzes the transfer of an acetyl moiety from 3-hydroxy-5-phosphonooxypentane-2,4-dione to CoA to form glycerone phosphate and acetyl-CoA. This is 3-hydroxy-5-phosphonooxypentane-2,4-dione thiolase from Salmonella typhimurium (strain LT2 / SGSC1412 / ATCC 700720).